The following is a 280-amino-acid chain: Large ribosomal subunit protein uL2 (280 aa).

Disordered regions lie at residues Met1–Met20, Pro29–His58, and Val225–Arg280. Over residues Ser45–His58 the composition is skewed to basic residues. Positions Lys253–Val269 are enriched in basic and acidic residues. Basic residues predominate over residues Arg270–Arg280.

Belongs to the universal ribosomal protein uL2 family. As to quaternary structure, part of the 50S ribosomal subunit. Forms a bridge to the 30S subunit in the 70S ribosome.

One of the primary rRNA binding proteins. Required for association of the 30S and 50S subunits to form the 70S ribosome, for tRNA binding and peptide bond formation. It has been suggested to have peptidyltransferase activity; this is somewhat controversial. Makes several contacts with the 16S rRNA in the 70S ribosome. This chain is Large ribosomal subunit protein uL2, found in Corynebacterium efficiens (strain DSM 44549 / YS-314 / AJ 12310 / JCM 11189 / NBRC 100395).